We begin with the raw amino-acid sequence, 306 residues long: NAD kinase 1 (306 aa).

Asp67 functions as the Proton acceptor in the catalytic mechanism. NAD(+) is bound by residues 67–68 (DG), 149–150 (NE), and Asp181.

The protein belongs to the NAD kinase family. Requires a divalent metal cation as cofactor.

Its subcellular location is the cytoplasm. It catalyses the reaction NAD(+) + ATP = ADP + NADP(+) + H(+). In terms of biological role, involved in the regulation of the intracellular balance of NAD and NADP, and is a key enzyme in the biosynthesis of NADP. Catalyzes specifically the phosphorylation on 2'-hydroxyl of the adenosine moiety of NAD to yield NADP. The protein is NAD kinase 1 of Thermosynechococcus vestitus (strain NIES-2133 / IAM M-273 / BP-1).